Reading from the N-terminus, the 226-residue chain is NADH-quinone oxidoreductase subunit C (226 aa).

Residues 1-21 are disordered; it reads MTEPTGDQTPEIIGVRRGMFG.

This sequence belongs to the complex I 30 kDa subunit family. In terms of assembly, NDH-1 is composed of 14 different subunits. Subunits NuoB, C, D, E, F, and G constitute the peripheral sector of the complex.

It localises to the cell membrane. The catalysed reaction is a quinone + NADH + 5 H(+)(in) = a quinol + NAD(+) + 4 H(+)(out). Its function is as follows. NDH-1 shuttles electrons from NADH, via FMN and iron-sulfur (Fe-S) centers, to quinones in the respiratory chain. The immediate electron acceptor for the enzyme in this species is believed to be a menaquinone. Couples the redox reaction to proton translocation (for every two electrons transferred, four hydrogen ions are translocated across the cytoplasmic membrane), and thus conserves the redox energy in a proton gradient. This is NADH-quinone oxidoreductase subunit C from Mycolicibacterium gilvum (strain PYR-GCK) (Mycobacterium gilvum (strain PYR-GCK)).